Reading from the N-terminus, the 888-residue chain is ETO1-like protein 1 (888 aa).

In terms of domain architecture, BTB spans 180–280 (KNVVFKIGEE…ACDRELASLI (101 aa)). TPR repeat units follow at residues 381–414 (VLGF…GHVY), 441–477 (SSVS…DPTL), 511–544 (LECL…CPDY), 637–670 (HERL…KRSF), and 711–744 (GQAL…RHTR). Residues 755–793 (LRNDKAAAYEEMTRLIEKAQNNASAYEKRSEYCDRELAK) are a coiled coil. TPR repeat units lie at residues 807–840 (VYPY…KADL) and 842–873 (LLHL…DPNH).

It belongs to the ETO1 family. As to quaternary structure, interacts with the C-terminal domain of ACS4, ACS5 and ACS9. As to expression, predominantly expressed in flowers.

Its pathway is protein modification; protein ubiquitination. Functionally, possible regulator of the ethylene pathway, which acts by regulating the stability of 1-aminocyclopropane-1-carboxylate synthase (ACS) enzymes. May act as a substrate-specific adapter that connects ACS enzymes, such as ACS5, to ubiquitin ligase complexes, leading to proteasomal degradation of ACS enzymes. The chain is ETO1-like protein 1 (EOL1) from Arabidopsis thaliana (Mouse-ear cress).